The primary structure comprises 283 residues: Protease HtpX (283 aa).

Helical transmembrane passes span 4–24 (ILLF…ILSV) and 33–53 (GGIL…SLFL). His139 provides a ligand contact to Zn(2+). Residue Glu140 is part of the active site. Zn(2+) is bound at residue His143. Helical transmembrane passes span 147–167 (GDMV…IFLS) and 190–210 (IYFL…SIIA). Glu218 serves as a coordination point for Zn(2+).

Belongs to the peptidase M48B family. The cofactor is Zn(2+).

Its subcellular location is the cell inner membrane. This chain is Protease HtpX, found in Haemophilus influenzae (strain PittGG).